The chain runs to 332 residues: D-xylose-binding periplasmic protein (332 aa).

The signal sequence occupies residues 1–23 (MKIKSALLTLVGALTVFSSSAHS).

Belongs to the bacterial solute-binding protein 2 family.

The protein localises to the periplasm. Involved in the high-affinity D-xylose membrane transport system. Binds with high affinity to xylose. The protein is D-xylose-binding periplasmic protein (xylF) of Haemophilus influenzae (strain ATCC 51907 / DSM 11121 / KW20 / Rd).